The sequence spans 157 residues: Large ribosomal subunit protein uL15 (157 aa).

It belongs to the universal ribosomal protein uL15 family. As to quaternary structure, part of the 50S ribosomal subunit.

Binds to the 23S rRNA. This chain is Large ribosomal subunit protein uL15, found in Ehrlichia ruminantium (strain Welgevonden).